Here is a 576-residue protein sequence, read N- to C-terminus: uncharacterized protein (576 aa).

2 stretches are compositionally biased toward polar residues: residues 1-21 and 28-40; these read MSTNPNAGIQPLTNSISQSAS and HTTSHESVSTYQL. The segment at 1–40 is disordered; it reads MSTNPNAGIQPLTNSISQSASAHPELYHTTSHESVSTYQL. 12 helical membrane-spanning segments follow: residues 149-169, 173-193, 200-220, 231-251, 261-281, 291-311, 366-386, 401-421, 446-466, 472-492, 503-525, and 542-562; these read FASSVFSVPAEAITTIFHISL, LLTMTVFLCGYIAGPIVWAPL, KLPLLIGMFGFGIFNISVAVA, FFSGFFASAPLTVVAAAFADM, ITIFAALVFDGPLVSPIIGGF, WTEYITSFMGFFALVIVYLFC, PIVFLITLYSSFVYAILYLLL, MGVAELPYIGLLVGVFIGSAI, LPPMMIGCFMFPAGIFWLSWS, VHWIVPTLSGLATGCGILLIF, YLFRAASAVAANTIMRSAMAAGF, and GSLLGFIAVALIPMPFAFFFF.

This sequence belongs to the major facilitator superfamily. CAR1 family.

The protein resides in the endoplasmic reticulum. It localises to the golgi apparatus. The protein localises to the membrane. This is an uncharacterized protein from Schizosaccharomyces pombe (strain 972 / ATCC 24843) (Fission yeast).